A 52-amino-acid polypeptide reads, in one-letter code: Conotoxin Ac4.3a (52 aa).

A propeptide spanning residues 1 to 11 is cleaved from the precursor; sequence SDFRNAAVHER. Glutamine 12 is modified (pyrrolidone carboxylic acid). Glutamate 14 carries the 4-carboxyglutamate modification. Residues threonine 18 and threonine 20 are each glycosylated (O-linked (HexNAc...) threonine). 4-hydroxyproline is present on residues proline 28, proline 33, and proline 47. Proline 47 carries the proline amide modification. Residues 48–52 constitute a propeptide that is removed on maturation; the sequence is GRRND.

Belongs to the conotoxin A superfamily. Contains 3 disulfide bonds. As to expression, expressed by the venom duct.

The protein localises to the secreted. Probable neurotoxin with ion channel inhibitor activity. This chain is Conotoxin Ac4.3a, found in Conus achatinus (Little frog cone).